Consider the following 210-residue polypeptide: FMN-dependent NADH:quinone oxidoreductase (210 aa).

Residues 17 to 19 and 148 to 151 contribute to the FMN site; these read SCS and SSGG.

This sequence belongs to the azoreductase type 1 family. Homodimer. It depends on FMN as a cofactor.

The enzyme catalyses 2 a quinone + NADH + H(+) = 2 a 1,4-benzosemiquinone + NAD(+). It carries out the reaction N,N-dimethyl-1,4-phenylenediamine + anthranilate + 2 NAD(+) = 2-(4-dimethylaminophenyl)diazenylbenzoate + 2 NADH + 2 H(+). Functionally, quinone reductase that provides resistance to thiol-specific stress caused by electrophilic quinones. Its function is as follows. Also exhibits azoreductase activity. Catalyzes the reductive cleavage of the azo bond in aromatic azo compounds to the corresponding amines. The polypeptide is FMN-dependent NADH:quinone oxidoreductase (Geotalea uraniireducens (strain Rf4) (Geobacter uraniireducens)).